The following is a 189-amino-acid chain: Adenylate kinase (189 aa).

12-17 contributes to the ATP binding site; it reads GSGKTT. Residues 33–62 are NMP; sequence STGDLLRAEVASGSELGKLIDGFISKGNLV. Residues T34, R39, 60–62, 87–90, and Q94 each bind AMP; these read NLV and GYPR. Residues 129-135 are LID; it reads GRARGAD. R130 contributes to the ATP binding site. R132 and R144 together coordinate AMP. An ATP-binding site is contributed by R172.

Belongs to the adenylate kinase family. As to quaternary structure, monomer.

It is found in the cytoplasm. It carries out the reaction AMP + ATP = 2 ADP. It participates in purine metabolism; AMP biosynthesis via salvage pathway; AMP from ADP: step 1/1. In terms of biological role, catalyzes the reversible transfer of the terminal phosphate group between ATP and AMP. Plays an important role in cellular energy homeostasis and in adenine nucleotide metabolism. This is Adenylate kinase from Campylobacter concisus (strain 13826).